The sequence spans 254 residues: UDP-2,3-diacylglucosamine hydrolase (254 aa).

Mn(2+) is bound by residues D8, H10, D41, N79, and H114. 79-80 provides a ligand contact to substrate; it reads NR. Substrate-binding residues include D122, S160, N164, K167, and H195. Residues H195 and H197 each coordinate Mn(2+).

The protein belongs to the LpxH family. It depends on Mn(2+) as a cofactor.

It localises to the cell inner membrane. The enzyme catalyses UDP-2-N,3-O-bis[(3R)-3-hydroxytetradecanoyl]-alpha-D-glucosamine + H2O = 2-N,3-O-bis[(3R)-3-hydroxytetradecanoyl]-alpha-D-glucosaminyl 1-phosphate + UMP + 2 H(+). Its pathway is glycolipid biosynthesis; lipid IV(A) biosynthesis; lipid IV(A) from (3R)-3-hydroxytetradecanoyl-[acyl-carrier-protein] and UDP-N-acetyl-alpha-D-glucosamine: step 4/6. Functionally, hydrolyzes the pyrophosphate bond of UDP-2,3-diacylglucosamine to yield 2,3-diacylglucosamine 1-phosphate (lipid X) and UMP by catalyzing the attack of water at the alpha-P atom. Involved in the biosynthesis of lipid A, a phosphorylated glycolipid that anchors the lipopolysaccharide to the outer membrane of the cell. In Aeromonas salmonicida (strain A449), this protein is UDP-2,3-diacylglucosamine hydrolase.